The primary structure comprises 59 residues: UPF0434 protein lpg1920 (59 aa).

This sequence belongs to the UPF0434 family.

The sequence is that of UPF0434 protein lpg1920 from Legionella pneumophila subsp. pneumophila (strain Philadelphia 1 / ATCC 33152 / DSM 7513).